We begin with the raw amino-acid sequence, 533 residues long: Frizzled/smoothened-like sans CRD protein H (533 aa).

The N-terminal stretch at 1–21 is a signal peptide; the sequence is MFIKFYFFIIFLILNFKNNYA. The Extracellular portion of the chain corresponds to 22–103; that stretch reads SPTLLDSVLS…GDWTTMMDMS (82 aa). A glycan (N-linked (GlcNAc...) asparagine) is linked at Asn76. The chain crosses the membrane as a helical span at residues 104 to 124; it reads LIVATISFFASIFLILTYSPL. The Cytoplasmic portion of the chain corresponds to 125–134; it reads MNPSYNNRHT. The chain crosses the membrane as a helical span at residues 135 to 155; sequence IGILSMSFGIFLIMFTDMYNL. Residues 156–177 are Extracellular-facing; it reads KKRFTLGCPSETRYAIQNDADC. A helical transmembrane segment spans residues 178-198; it reads LITGLIFQFGCVSAVFFWTAL. Over 199 to 216 the chain is Cytoplasmic; that stretch reads SLDLYFQITNRNISRKYD. The chain crosses the membrane as a helical span at residues 217–237; the sequence is LYYFIGVNLISLIFTFVPVIS. The Extracellular portion of the chain corresponds to 238–259; sequence KSYGYGDFALGCWILDFNYALG. Residues 260-280 traverse the membrane as a helical segment; the sequence is CFWIPLSVCLIFSTVVVLMIL. The Cytoplasmic portion of the chain corresponds to 281-302; it reads YEVYKIYKASNQKTSLKGHIKP. Residues 303-323 form a helical membrane-spanning segment; that stretch reads LLCLISNCFEFFYVFGYSLYL. Residues 324-360 lie on the Extracellular side of the membrane; it reads ATKLTELHDNMDAYIKCLFLNSQNDPDSYTCPDHRLK. Residues 361–381 form a helical membrane-spanning segment; sequence LGPQFLFFLSLRLLGVSGIVF. Residues 382 to 533 are Cytoplasmic-facing; the sequence is YGTNSKVRKI…LTNINTIDNV (152 aa). The interval 454–533 is disordered; the sequence is IIVTPGGDDD…LTNINTIDNV (80 aa). A compositionally biased stretch (low complexity) spans 466–518; it reads NNNNNNNNNNNNNNNNNNNNNNNNNNNNNNNNNNNNNNNNNNNNNSNENNENN. A coiled-coil region spans residues 501–528; that stretch reads NNNNNNNNNNSNENNENNTQEIELTNIN. Positions 519–533 are enriched in polar residues; it reads TQEIELTNINTIDNV.

Belongs to the G-protein coupled receptor Fz/Smo family.

The protein resides in the membrane. The sequence is that of Frizzled/smoothened-like sans CRD protein H (fscH) from Dictyostelium discoideum (Social amoeba).